We begin with the raw amino-acid sequence, 355 residues long: Phosphoribosylformylglycinamidine cyclo-ligase (355 aa).

This sequence belongs to the AIR synthase family.

The protein localises to the cytoplasm. It carries out the reaction 2-formamido-N(1)-(5-O-phospho-beta-D-ribosyl)acetamidine + ATP = 5-amino-1-(5-phospho-beta-D-ribosyl)imidazole + ADP + phosphate + H(+). The protein operates within purine metabolism; IMP biosynthesis via de novo pathway; 5-amino-1-(5-phospho-D-ribosyl)imidazole from N(2)-formyl-N(1)-(5-phospho-D-ribosyl)glycinamide: step 2/2. In Hamiltonella defensa subsp. Acyrthosiphon pisum (strain 5AT), this protein is Phosphoribosylformylglycinamidine cyclo-ligase.